Consider the following 402-residue polypeptide: Calcium-responsive transactivator (402 aa).

Residues 1 to 148 form an N-terminal auto-inhibitory domain; necessary for interaction with SMARCA4/BRG1 region; that stretch reads MSVAFASARP…TLPTTSMSLS (148 aa). Positions 50–53 match the SH2-binding motif; it reads YQQI. Disordered regions lie at residues 72-171 and 221-402; these read QSLL…VPMQ and AMMG…NYQQ. Residues 85-106 show a composition bias toward low complexity; sequence LGPGALSQSGSSQGLHPQGSLS. Composition is skewed to polar residues over residues 128–149 and 161–171; these read NHVS…SLSG and SGPTSQSVPMQ. A methionine-rich intra-molecular domain region spans residues 149-238; it reads GSGHGTGPGY…GGSMMGQRPM (90 aa). Low complexity predominate over residues 233–251; it reads MGQRPMAPYRPSQQGSSQQ. Residues 252-323 are MFD domain; sequence YLGQEEYYSE…SQYSQQQAGY (72 aa). The span at 261-277 shows a compositional bias: polar residues; that stretch reads EQYSHSQGSAEPMSQQY. Residues 296–305 show a composition bias toward basic and acidic residues; that stretch reads SYDRSFEDPT. A compositionally biased stretch (low complexity) spans 311 to 375; the sequence is GGNSQYSQQQ…QGQGQQYGSY (65 aa). The necessary for nuclear localization stretch occupies residues 340-402; sequence NQQSYPGQQQ…EQGQYGNYQQ (63 aa). Positions 359–362 match the SH2-binding motif; it reads SQYS. A compositionally biased stretch (polar residues) spans 376–388; sequence RTSQTGPSAQQQR. Positions 377 to 385 match the SH3-binding motif; that stretch reads TSQTGPSAQ. Over residues 390-402 the composition is skewed to low complexity; sequence YGYEQGQYGNYQQ. The necessary for interaction with CREBBP and for the recruitment of CREBBP to the nuclear bodies stretch occupies residues 393-402; that stretch reads EQGQYGNYQQ. Positions 397–400 match the SH2-binding motif; the sequence is YGNY.

Belongs to the SS18 family. Homodimer. Dimerization may be necessary for its function in neuronal dendritic development. Interacts (via C-terminus) with CREBBP (via N-terminus), EP300 and SMARCA4/BRG1. Interacts with the nBAF complex. Association with CREBBP facilitates transcription while the association with SMARCA4/BRG1 suppresses CREST-mediated transcription in resting neurons.

The protein resides in the nucleus. It localises to the chromosome. The protein localises to the centromere. It is found in the kinetochore. In terms of biological role, transcriptional activator which is required for calcium-dependent dendritic growth and branching in cortical neurons. Recruits CREB-binding protein (CREBBP) to nuclear bodies. Component of the CREST-BRG1 complex, a multiprotein complex that regulates promoter activation by orchestrating a calcium-dependent release of a repressor complex and a recruitment of an activator complex. In resting neurons, transcription of the c-FOS promoter is inhibited by BRG1-dependent recruitment of a phospho-RB1-HDAC1 repressor complex. Upon calcium influx, RB1 is dephosphorylated by calcineurin, which leads to release of the repressor complex. At the same time, there is increased recruitment of CREBBP to the promoter by a CREST-dependent mechanism, which leads to transcriptional activation. The CREST-BRG1 complex also binds to the NR2B promoter, and activity-dependent induction of NR2B expression involves a release of HDAC1 and recruitment of CREBBP. This Mus musculus (Mouse) protein is Calcium-responsive transactivator (Ss18l1).